Here is a 474-residue protein sequence, read N- to C-terminus: C6 finger domain transcription factor aclZ (474 aa).

The segment at residues 42-69 (CNQCHAAKVRCSGERTGCDRCNNLQYQC) is a DNA-binding region (zn(2)-C6 fungal-type). 2 disordered regions span residues 85 to 148 (RGNK…SHSA) and 177 to 206 (MSSDQDPSRSRGHSLQAPSHSGHSIADSHT). A compositionally biased stretch (polar residues) spans 90 to 105 (VRTTTEALQRPATAST). The span at 117 to 138 (TDQRSENDPLSRSDFGEQDAAH) shows a compositional bias: basic and acidic residues.

It is found in the nucleus. Its function is as follows. Transcription factor that specifically regulates the gene cluster that mediates the biosynthesis of aspirochlorine (or antibiotic A30641), an unusual halogenated spiro compound with distinctive antifungal properties due to selective inhibition of protein biosynthesis, and which is also active against bacteria, viruses, and murine tumor cells. The protein is C6 finger domain transcription factor aclZ of Aspergillus oryzae (strain ATCC 42149 / RIB 40) (Yellow koji mold).